We begin with the raw amino-acid sequence, 83 residues long: Small ribosomal subunit protein bS16 (83 aa).

This sequence belongs to the bacterial ribosomal protein bS16 family.

This chain is Small ribosomal subunit protein bS16, found in Pseudomonas putida (strain ATCC 700007 / DSM 6899 / JCM 31910 / BCRC 17059 / LMG 24140 / F1).